The sequence spans 695 residues: Polyribonucleotide nucleotidyltransferase (695 aa).

2 residues coordinate Mg(2+): Asp-486 and Asp-492. Residues 553-612 (PRIETMQINTSKIATVIGPGGKQIRQIIERSGAQVDINDDGVINIAASTQESINKAKELI) form the KH domain. Residues 622–690 (GKVYNGRVTS…EKGQLKLSHK (69 aa)) enclose the S1 motif domain.

It belongs to the polyribonucleotide nucleotidyltransferase family. Mg(2+) is required as a cofactor.

It localises to the cytoplasm. The catalysed reaction is RNA(n+1) + phosphate = RNA(n) + a ribonucleoside 5'-diphosphate. Its function is as follows. Involved in mRNA degradation. Catalyzes the phosphorolysis of single-stranded polyribonucleotides processively in the 3'- to 5'-direction. The chain is Polyribonucleotide nucleotidyltransferase from Chlamydia trachomatis serovar D (strain ATCC VR-885 / DSM 19411 / UW-3/Cx).